A 172-amino-acid polypeptide reads, in one-letter code: Methylated-DNA--protein-cysteine methyltransferase (172 aa).

Residue Cys142 is the Nucleophile; methyl group acceptor of the active site.

The protein belongs to the MGMT family.

It is found in the cytoplasm. The catalysed reaction is a 6-O-methyl-2'-deoxyguanosine in DNA + L-cysteinyl-[protein] = S-methyl-L-cysteinyl-[protein] + a 2'-deoxyguanosine in DNA. The enzyme catalyses a 4-O-methyl-thymidine in DNA + L-cysteinyl-[protein] = a thymidine in DNA + S-methyl-L-cysteinyl-[protein]. In terms of biological role, involved in the cellular defense against the biological effects of O6-methylguanine (O6-MeG) and O4-methylthymine (O4-MeT) in DNA. Repairs the methylated nucleobase in DNA by stoichiometrically transferring the methyl group to a cysteine residue in the enzyme. This is a suicide reaction: the enzyme is irreversibly inactivated. This Pyrococcus abyssi (strain GE5 / Orsay) protein is Methylated-DNA--protein-cysteine methyltransferase.